Here is a 136-residue protein sequence, read N- to C-terminus: Translation initiation factor 5A (136 aa).

Residue Lys38 is modified to Hypusine.

The protein belongs to the eIF-5A family.

The protein resides in the cytoplasm. Its function is as follows. Functions by promoting the formation of the first peptide bond. The protein is Translation initiation factor 5A of Methanopyrus kandleri (strain AV19 / DSM 6324 / JCM 9639 / NBRC 100938).